The chain runs to 82 residues: M-zodatoxin-Lt3a (82 aa).

A signal peptide spans 1–22; it reads MKTYAVLLALVVAFVCIAESTG. Residues 23-61 constitute a propeptide that is removed on maturation; it reads YPVEDLEDDELTELEAEALLEDLLEDLELEDLDYNEEAR. The Processing quadruplet motif signature appears at 58–61; that stretch reads EEAR. Alanine amide is present on Ala81.

This sequence belongs to the cationic peptide 03 (latarcin) family. 03 subfamily. Cleavage of the propeptide depends on the processing quadruplet motif (XXXR, with at least one of X being E). In terms of tissue distribution, expressed by the venom gland.

It is found in the secreted. It localises to the target cell membrane. It has antimicrobial activity against Gram-positive bacteria (A.globiformis VKM Ac-1112 (MIC=0.3 uM), and B.subtilis VKM B-501 (MIC=1.2 uM)), Gram-negative bacteria (E.coli DH5-alpha (MIC=2.5 uM), E.coli MH1 (MIC=6.0 uM), and P.aeruginosa PAO1 (MIC&gt;40 uM)), and yeasts (P.pastoris GS115 (MIC=20 uM), and S.cerevisiae Y190 (MIC=20 uM)). Causes paralysis, but is not lethal when injected into insect (M.domestica) larvae. A second study reports antibacterial activity against E.coli (MIC=100 uM) and S.aureus (MIC=84 uM). Furthermore, increases efficacy of antibiotics (chloramphenicol, streptomycin, kanamycin, novobiocin) when tested against E.coli, probably by facilitating their incorporation into the bacteria. The protein is M-zodatoxin-Lt3a of Lachesana tarabaevi (Spider).